A 259-amino-acid chain; its full sequence is Small ribosomal subunit protein uS2 (259 aa).

A disordered region spans residues 232–259; it reads KAMEAEETKAAEKAVETEAKEETPQEAK.

The protein belongs to the universal ribosomal protein uS2 family.

This is Small ribosomal subunit protein uS2 from Maridesulfovibrio salexigens (strain ATCC 14822 / DSM 2638 / NCIMB 8403 / VKM B-1763) (Desulfovibrio salexigens).